Reading from the N-terminus, the 369-residue chain is tRNA 2-selenouridine synthase (369 aa).

Positions 15 to 138 (FLNQHPMMDV…MRQYLIGVIE (124 aa)) constitute a Rhodanese domain. Catalysis depends on Cys98, which acts as the S-selanylcysteine intermediate.

This sequence belongs to the SelU family. Monomer.

It catalyses the reaction 5-methylaminomethyl-2-thiouridine(34) in tRNA + selenophosphate + (2E)-geranyl diphosphate + H2O + H(+) = 5-methylaminomethyl-2-selenouridine(34) in tRNA + (2E)-thiogeraniol + phosphate + diphosphate. The enzyme catalyses 5-methylaminomethyl-2-thiouridine(34) in tRNA + (2E)-geranyl diphosphate = 5-methylaminomethyl-S-(2E)-geranyl-thiouridine(34) in tRNA + diphosphate. The catalysed reaction is 5-methylaminomethyl-S-(2E)-geranyl-thiouridine(34) in tRNA + selenophosphate + H(+) = 5-methylaminomethyl-2-(Se-phospho)selenouridine(34) in tRNA + (2E)-thiogeraniol. It carries out the reaction 5-methylaminomethyl-2-(Se-phospho)selenouridine(34) in tRNA + H2O = 5-methylaminomethyl-2-selenouridine(34) in tRNA + phosphate. Its function is as follows. Involved in the post-transcriptional modification of the uridine at the wobble position (U34) of tRNA(Lys), tRNA(Glu) and tRNA(Gln). Catalyzes the conversion of 2-thiouridine (S2U-RNA) to 2-selenouridine (Se2U-RNA). Acts in a two-step process involving geranylation of 2-thiouridine (S2U) to S-geranyl-2-thiouridine (geS2U) and subsequent selenation of the latter derivative to 2-selenouridine (Se2U) in the tRNA chain. This Shewanella sp. (strain W3-18-1) protein is tRNA 2-selenouridine synthase.